The following is a 189-amino-acid chain: Large ribosomal subunit protein bL25 (189 aa).

The protein belongs to the bacterial ribosomal protein bL25 family. CTC subfamily. In terms of assembly, part of the 50S ribosomal subunit; part of the 5S rRNA/L5/L18/L25 subcomplex. Contacts the 5S rRNA. Binds to the 5S rRNA independently of L5 and L18.

Functionally, this is one of the proteins that binds to the 5S RNA in the ribosome where it forms part of the central protuberance. This chain is Large ribosomal subunit protein bL25, found in Azobacteroides pseudotrichonymphae genomovar. CFP2.